A 619-amino-acid chain; its full sequence is Sodium-dependent dopamine transporter (619 aa).

At 1 to 56 the chain is on the cytoplasmic side; that stretch reads MSKSKCSVGPMSSVVAPAKESNAVGPREVELILVKEQNGVQLTNSTLINPPQTPVE. A discontinuously helical transmembrane segment spans residues 57 to 95; that stretch reads AQERETWSKKIDFLLSVIGFAVDLANVWRFPYLCYKNGG. Na(+) contacts are provided by G75, A77, V78, D79, and N82. D79 contributes to the dopamine binding site. Transmembrane regions (helical) follow at residues 96–127 and 128–171; these read GAFLVPYLLFMVIAGMPLFYMELALGQFNREG and AAGV…FSSF. Dopamine is bound by residues S149 and G153. Residues 172 to 235 lie on the Extracellular side of the membrane; sequence TMDLPWIHCN…SRGIDDLGPP (64 aa). C180 and C189 are disulfide-bonded. 4 N-linked (GlcNAc...) asparagine glycosylation sites follow: N181, N188, N196, and N204. 2 consecutive transmembrane segments (helical) span residues 236–255 and 256–286; these read RWQLTACLVLVIVLLYFSLW and KGVKTSGKVVWITATMPYVVLTALLLRGVTL. At 287–305 the chain is on the extracellular side; the sequence is PGAMDGIRAYLSVDFYRLC. Residues 306–334 form a discontinuously helical membrane-spanning segment; the sequence is EASVWIDAATQVCFSLGVGFGVLIAFSSY. Q316 is a chloride binding site. Residue F319 participates in dopamine binding. Residues S320 and N352 each contribute to the Na(+) site. S320 is a chloride binding site. The chain crosses the membrane as a helical span at residues 335–375; sequence NKFTNNCYRDAIITTSINSLTSFSSGFVVFSFLGYMAQKHN. S356 serves as a coordination point for chloride. The Extracellular segment spans residues 376 to 399; it reads VPIRDVATDGPGLIFIIYPEAIAT. 3 helical membrane passes run 400–441, 442–465, and 466–498; these read LPLS…QLLH, RHRELFTLGIVLATFLLSLFCVTN, and GGIYVFTLLDHFAAGTSILFGVLIEAIGVAWFY. Na(+)-binding residues include L417, D420, and S421. Positions 421 and 422 each coordinate dopamine. Over 499-515 the chain is Cytoplasmic; sequence GVQQFSDDIKQMTGQRP. Residues 516–541 traverse the membrane as a helical segment; that stretch reads NLYWRLCWKLVSPCFLLYVVVVSIVT. The Extracellular segment spans residues 542 to 552; sequence FRPPHYGAYIF. Residues 553–582 form a helical membrane-spanning segment; that stretch reads PDWANALGWIIATSSMAMVPIYATYKFCSL. Residues 560-589 are interaction with TGFB1I1; that stretch reads GWIIATSSMAMVPIYATYKFCSLPGSFREK. Residues 583–619 are Cytoplasmic-facing; it reads PGSFREKLAYAITPEKDHQLVDRGEVRQFTLRHWLLL.

This sequence belongs to the sodium:neurotransmitter symporter (SNF) (TC 2.A.22) family. SLC6A3 subfamily. As to quaternary structure, monomer. Homooligomer; disulfide-linked. Interacts with PRKCABP and TGFB1I1. Interacts (via N-terminus) with SYNGR3 (via N-terminus). Interacts with SLC18A2. Interacts with TOR1A (ATP-bound); TOR1A regulates SLC6A3 subcellular location. Interacts with alpha-synuclein/SNCA. Interacts with SEPTIN4. In terms of tissue distribution, brain. Expressed in the substantia nigra and ventral tegmental area, regions that contain dopaminergic cell bodies.

The protein resides in the cell membrane. It is found in the cell projection. It localises to the neuron projection. The protein localises to the axon. The enzyme catalyses dopamine(out) + chloride(out) + Na(+)(out) = dopamine(in) + chloride(in) + Na(+)(in). It carries out the reaction (R)-noradrenaline(out) + chloride(out) + Na(+)(out) = (R)-noradrenaline(in) + chloride(in) + Na(+)(in). It catalyses the reaction dopamine(out) + chloride(out) + 2 Na(+)(out) = dopamine(in) + chloride(in) + 2 Na(+)(in). Inhibited by mazindol, cocaine, desipramine, GBR 12783 dihydrochloride, GBR 12909 dihydrochloride and nomifensine. Inhibited by zinc ions. Functionally, mediates sodium- and chloride-dependent transport of dopamine. Also mediates sodium- and chloride-dependent transport of norepinephrine (also known as noradrenaline). Regulator of light-dependent retinal hyaloid vessel regression, downstream of OPN5 signaling. This Rattus norvegicus (Rat) protein is Sodium-dependent dopamine transporter (Slc6a3).